Reading from the N-terminus, the 59-residue chain is U-reduvitoxin-Pr6a (59 aa).

An N-terminal signal peptide occupies residues 1 to 19; the sequence is MKVFLLTILLCFLIAYCAG. 3 cysteine pairs are disulfide-bonded: Cys31–Cys46, Cys38–Cys51, and Cys45–Cys58.

It belongs to the venom Ptu1-like knottin family. Expressed by the venom gland.

It is found in the secreted. Its function is as follows. Binds reversibly and blocks P/Q-type voltage-gated calcium channels (Cav). The chain is U-reduvitoxin-Pr6a from Platymeris rhadamanthus (Red spot assassin bug).